The sequence spans 929 residues: Bifunctional glutamine synthetase adenylyltransferase/adenylyl-removing enzyme (929 aa).

Residues 1–423 form an adenylyl removase region; it reads MSTPIDSSRA…RHFEQIFAAR (423 aa). The tract at residues 433–929 is adenylyl transferase; that stretch reads ARIRPEQSGD…FQLWEDIFGT (497 aa).

This sequence belongs to the GlnE family. Mg(2+) serves as cofactor.

It carries out the reaction [glutamine synthetase]-O(4)-(5'-adenylyl)-L-tyrosine + phosphate = [glutamine synthetase]-L-tyrosine + ADP. It catalyses the reaction [glutamine synthetase]-L-tyrosine + ATP = [glutamine synthetase]-O(4)-(5'-adenylyl)-L-tyrosine + diphosphate. Functionally, involved in the regulation of glutamine synthetase GlnA, a key enzyme in the process to assimilate ammonia. When cellular nitrogen levels are high, the C-terminal adenylyl transferase (AT) inactivates GlnA by covalent transfer of an adenylyl group from ATP to specific tyrosine residue of GlnA, thus reducing its activity. Conversely, when nitrogen levels are low, the N-terminal adenylyl removase (AR) activates GlnA by removing the adenylyl group by phosphorolysis, increasing its activity. The regulatory region of GlnE binds the signal transduction protein PII (GlnB) which indicates the nitrogen status of the cell. The protein is Bifunctional glutamine synthetase adenylyltransferase/adenylyl-removing enzyme of Nitrosomonas europaea (strain ATCC 19718 / CIP 103999 / KCTC 2705 / NBRC 14298).